The sequence spans 244 residues: 5-oxoprolinase subunit A (244 aa).

It belongs to the LamB/PxpA family. In terms of assembly, forms a complex composed of PxpA, PxpB and PxpC.

It catalyses the reaction 5-oxo-L-proline + ATP + 2 H2O = L-glutamate + ADP + phosphate + H(+). Catalyzes the cleavage of 5-oxoproline to form L-glutamate coupled to the hydrolysis of ATP to ADP and inorganic phosphate. The chain is 5-oxoprolinase subunit A from Citrobacter koseri (strain ATCC BAA-895 / CDC 4225-83 / SGSC4696).